The following is a 132-amino-acid chain: Venom CUB domain-containing protein 2 (132 aa).

The signal sequence occupies residues M1 to A17. Residues E22 to A129 form the CUB domain. 2 disulfides stabilise this stretch: C66–C125 and C77–C94.

Belongs to the venom CUB family. Expressed by the venom gland (posterior main gland) (at protein level).

Its subcellular location is the secreted. In Platymeris rhadamanthus (Red spot assassin bug), this protein is Venom CUB domain-containing protein 2.